The following is a 447-amino-acid chain: Tubulin beta chain (447 aa).

Glutamine 11, glutamate 69, serine 138, glycine 142, threonine 143, glycine 144, asparagine 204, and asparagine 226 together coordinate GTP. Residue glutamate 69 coordinates Mg(2+). The tract at residues 419-447 (VSEYQQYQDATADEEGEYEDEDQEAEDDM) is disordered. A compositionally biased stretch (acidic residues) spans 429–447 (TADEEGEYEDEDQEAEDDM).

This sequence belongs to the tubulin family. In terms of assembly, dimer of alpha and beta chains. A typical microtubule is a hollow water-filled tube with an outer diameter of 25 nm and an inner diameter of 15 nM. Alpha-beta heterodimers associate head-to-tail to form protofilaments running lengthwise along the microtubule wall with the beta-tubulin subunit facing the microtubule plus end conferring a structural polarity. Microtubules usually have 13 protofilaments but different protofilament numbers can be found in some organisms and specialized cells. It depends on Mg(2+) as a cofactor.

Its subcellular location is the cytoplasm. It is found in the cytoskeleton. In terms of biological role, tubulin is the major constituent of microtubules, a cylinder consisting of laterally associated linear protofilaments composed of alpha- and beta-tubulin heterodimers. Microtubules grow by the addition of GTP-tubulin dimers to the microtubule end, where a stabilizing cap forms. Below the cap, tubulin dimers are in GDP-bound state, owing to GTPase activity of alpha-tubulin. The chain is Tubulin beta chain (TUBB) from Hordeum vulgare (Barley).